Consider the following 104-residue polypeptide: Large ribosomal subunit protein uL24 (104 aa).

The protein belongs to the universal ribosomal protein uL24 family. As to quaternary structure, part of the 50S ribosomal subunit.

In terms of biological role, one of two assembly initiator proteins, it binds directly to the 5'-end of the 23S rRNA, where it nucleates assembly of the 50S subunit. One of the proteins that surrounds the polypeptide exit tunnel on the outside of the subunit. In Escherichia coli O81 (strain ED1a), this protein is Large ribosomal subunit protein uL24.